The chain runs to 205 residues: Methylthioribulose-1-phosphate dehydratase (205 aa).

2 residues coordinate Zn(2+): H94 and H96.

This sequence belongs to the aldolase class II family. MtnB subfamily. It depends on Zn(2+) as a cofactor.

The catalysed reaction is 5-(methylsulfanyl)-D-ribulose 1-phosphate = 5-methylsulfanyl-2,3-dioxopentyl phosphate + H2O. The protein operates within amino-acid biosynthesis; L-methionine biosynthesis via salvage pathway; L-methionine from S-methyl-5-thio-alpha-D-ribose 1-phosphate: step 2/6. Its function is as follows. Catalyzes the dehydration of methylthioribulose-1-phosphate (MTRu-1-P) into 2,3-diketo-5-methylthiopentyl-1-phosphate (DK-MTP-1-P). The sequence is that of Methylthioribulose-1-phosphate dehydratase from Pectobacterium carotovorum subsp. carotovorum (strain PC1).